A 431-amino-acid chain; its full sequence is Dihydroorotase (431 aa).

The Zn(2+) site is built by histidine 59 and histidine 61. Residues histidine 61–arginine 63 and asparagine 93 contribute to the substrate site. Residues aspartate 151, histidine 178, histidine 231, and aspartate 304 each coordinate Zn(2+). Residue aspartate 304 is part of the active site. Substrate is bound by residues histidine 308 and phenylalanine 322–glycine 323.

This sequence belongs to the metallo-dependent hydrolases superfamily. DHOase family. Class I DHOase subfamily. It depends on Zn(2+) as a cofactor.

The enzyme catalyses (S)-dihydroorotate + H2O = N-carbamoyl-L-aspartate + H(+). Its pathway is pyrimidine metabolism; UMP biosynthesis via de novo pathway; (S)-dihydroorotate from bicarbonate: step 3/3. Catalyzes the reversible cyclization of carbamoyl aspartate to dihydroorotate. The polypeptide is Dihydroorotase (Thermoanaerobacter sp. (strain X514)).